Here is a 160-residue protein sequence, read N- to C-terminus: Leucokinin (160 aa).

The first 19 residues, 1-19 (MAKIVLCMVLLAFGRQVYG), serve as a signal peptide directing secretion. Residues 20 to 130 (ASLVPAPISE…RIKSQLQRDE (111 aa)) constitute a propeptide that is removed on maturation. Gly-147 is modified (glycine amide). The propeptide occupies 151–160 (SPEPPILPDY).

The protein localises to the secreted. Its function is as follows. Acts through intracellular calcium in Malpighian tubule stellate cells to raise chloride conductance. In Drosophila melanogaster (Fruit fly), this protein is Leucokinin (Lk).